We begin with the raw amino-acid sequence, 401 residues long: tRNA(Met) cytidine acetate ligase (401 aa).

ATP contacts are provided by residues 7–20 (VVEY…HLYH), Gly101, Asn160, and 185–186 (RI).

Belongs to the TmcAL family.

The protein localises to the cytoplasm. The enzyme catalyses cytidine(34) in elongator tRNA(Met) + acetate + ATP = N(4)-acetylcytidine(34) in elongator tRNA(Met) + AMP + diphosphate. In terms of biological role, catalyzes the formation of N(4)-acetylcytidine (ac(4)C) at the wobble position of elongator tRNA(Met), using acetate and ATP as substrates. First activates an acetate ion to form acetyladenylate (Ac-AMP) and then transfers the acetyl group to tRNA to form ac(4)C34. This is tRNA(Met) cytidine acetate ligase from Anoxybacillus flavithermus (strain DSM 21510 / WK1).